The sequence spans 205 residues: LIM domain-containing protein PLIM2b (205 aa).

LIM zinc-binding domains follow at residues 8-68 (DKCN…LFKE) and 102-162 (DKCA…LFME). The disordered stretch occupies residues 177-205 (RTASGNTLPPEPTEDVAVEAKEENGVSES). Over residues 194-205 (VEAKEENGVSES) the composition is skewed to basic and acidic residues.

In terms of assembly, interacts with F-actin. Predominantly expressed in flowers and in pollen grains. Detected in vasculature and roots.

The protein localises to the cytoplasm. Its subcellular location is the cytoskeleton. Its function is as follows. Binds to actin filaments and promotes cross-linking into thick bundles. Has an actin-stabilizing activity. The actin regulatory activities are inhibited by pH &gt; 6.8 but are [Ca(2+)] independent. The chain is LIM domain-containing protein PLIM2b from Arabidopsis thaliana (Mouse-ear cress).